Here is a 404-residue protein sequence, read N- to C-terminus: Cysteine desulfurase IscS (404 aa).

Pyridoxal 5'-phosphate is bound by residues 75-76, asparagine 155, glutamine 183, and 203-205; these read AT and SAH. At lysine 206 the chain carries N6-(pyridoxal phosphate)lysine. Threonine 243 contributes to the pyridoxal 5'-phosphate binding site. Catalysis depends on cysteine 328, which acts as the Cysteine persulfide intermediate. Cysteine 328 contacts [2Fe-2S] cluster.

Belongs to the class-V pyridoxal-phosphate-dependent aminotransferase family. NifS/IscS subfamily. As to quaternary structure, homodimer. Forms a heterotetramer with IscU, interacts with other sulfur acceptors. Requires pyridoxal 5'-phosphate as cofactor.

Its subcellular location is the cytoplasm. It carries out the reaction (sulfur carrier)-H + L-cysteine = (sulfur carrier)-SH + L-alanine. The protein operates within cofactor biosynthesis; iron-sulfur cluster biosynthesis. Functionally, master enzyme that delivers sulfur to a number of partners involved in Fe-S cluster assembly, tRNA modification or cofactor biosynthesis. Catalyzes the removal of elemental sulfur atoms from cysteine to produce alanine. Functions as a sulfur delivery protein for Fe-S cluster synthesis onto IscU, an Fe-S scaffold assembly protein, as well as other S acceptor proteins. The polypeptide is Cysteine desulfurase IscS (Pseudomonas aeruginosa (strain LESB58)).